Here is a 205-residue protein sequence, read N- to C-terminus: UPF0688 protein C1orf174 homolog (205 aa).

A compositionally biased stretch (basic residues) spans methionine 1 to asparagine 18. Disordered stretches follow at residues methionine 1–valine 128 and alanine 184–isoleucine 205. Residues asparagine 46–methionine 63 are compositionally biased toward basic and acidic residues. Residues isoleucine 71–threonine 108 are compositionally biased toward polar residues. A compositionally biased stretch (acidic residues) spans glutamate 187–alanine 196.

The protein belongs to the UPF0688 family.

Its subcellular location is the nucleus. The polypeptide is UPF0688 protein C1orf174 homolog (Xenopus laevis (African clawed frog)).